Consider the following 876-residue polypeptide: Valine--tRNA ligase (876 aa).

The 'HIGH' region signature appears at 44–54; sequence PNVTGKLHLGH. The short motif at 520–524 is the 'KMSKS' region element; the sequence is KMSKS. K523 is an ATP binding site. Residues 805–876 adopt a coiled-coil conformation; that stretch reads LEGLIDMDKE…VKARIEQLKA (72 aa).

It belongs to the class-I aminoacyl-tRNA synthetase family. ValS type 1 subfamily. In terms of assembly, monomer.

It is found in the cytoplasm. The catalysed reaction is tRNA(Val) + L-valine + ATP = L-valyl-tRNA(Val) + AMP + diphosphate. In terms of biological role, catalyzes the attachment of valine to tRNA(Val). As ValRS can inadvertently accommodate and process structurally similar amino acids such as threonine, to avoid such errors, it has a 'posttransfer' editing activity that hydrolyzes mischarged Thr-tRNA(Val) in a tRNA-dependent manner. This Staphylococcus aureus (strain MRSA252) protein is Valine--tRNA ligase.